We begin with the raw amino-acid sequence, 175 residues long: Ribosome maturation factor RimM (175 aa).

In terms of domain architecture, PRC barrel spans 97–170 (NGQYYWTDVL…YLYVDWQMAW (74 aa)).

It belongs to the RimM family. In terms of assembly, binds ribosomal protein uS19.

It localises to the cytoplasm. Its function is as follows. An accessory protein needed during the final step in the assembly of 30S ribosomal subunit, possibly for assembly of the head region. Essential for efficient processing of 16S rRNA. May be needed both before and after RbfA during the maturation of 16S rRNA. It has affinity for free ribosomal 30S subunits but not for 70S ribosomes. This chain is Ribosome maturation factor RimM, found in Dichelobacter nodosus (strain VCS1703A).